Here is a 334-residue protein sequence, read N- to C-terminus: 7,8-didemethyl-8-hydroxy-5-deazariboflavin synthase (334 aa).

One can recognise a Radical SAM core domain in the interval 2–248; sequence VSYSKNVFVP…PDVPVQVPPN (247 aa). 3 residues coordinate [4Fe-4S] cluster: C16, C20, and C23.

This sequence belongs to the radical SAM superfamily. CofG family. In terms of assembly, consists of two subunits, CofG and CofH. [4Fe-4S] cluster serves as cofactor.

The enzyme catalyses 5-amino-5-(4-hydroxybenzyl)-6-(D-ribitylimino)-5,6-dihydrouracil + S-adenosyl-L-methionine = 7,8-didemethyl-8-hydroxy-5-deazariboflavin + 5'-deoxyadenosine + L-methionine + NH4(+) + H(+). Its pathway is cofactor biosynthesis; coenzyme F0 biosynthesis. Functionally, catalyzes the radical-mediated synthesis of 7,8-didemethyl-8-hydroxy-5-deazariboflavin from 5-amino-5-(4-hydroxybenzyl)-6-(D-ribitylimino)-5,6-dihydrouracil. The sequence is that of 7,8-didemethyl-8-hydroxy-5-deazariboflavin synthase from Methanopyrus kandleri (strain AV19 / DSM 6324 / JCM 9639 / NBRC 100938).